Here is a 383-residue protein sequence, read N- to C-terminus: S-adenosylmethionine synthase (383 aa).

His15 lines the ATP pocket. Residue Asp17 coordinates Mg(2+). Position 43 (Glu43) interacts with K(+). L-methionine contacts are provided by Glu56 and Gln99. Positions Gln99–Arg109 are flexible loop. ATP contacts are provided by residues Asp164–Lys166, Arg230–Phe231, Asp239, Arg245–Lys246, Ala262, and Lys266. Asp239 contacts L-methionine. Lys270 contributes to the L-methionine binding site.

It belongs to the AdoMet synthase family. Homotetramer; dimer of dimers. Mg(2+) serves as cofactor. It depends on K(+) as a cofactor.

The protein localises to the cytoplasm. The catalysed reaction is L-methionine + ATP + H2O = S-adenosyl-L-methionine + phosphate + diphosphate. It participates in amino-acid biosynthesis; S-adenosyl-L-methionine biosynthesis; S-adenosyl-L-methionine from L-methionine: step 1/1. Its function is as follows. Catalyzes the formation of S-adenosylmethionine (AdoMet) from methionine and ATP. The overall synthetic reaction is composed of two sequential steps, AdoMet formation and the subsequent tripolyphosphate hydrolysis which occurs prior to release of AdoMet from the enzyme. This Shewanella baltica (strain OS223) protein is S-adenosylmethionine synthase.